The sequence spans 868 residues: MHELYQPREIEAAAQTFWDEQKSFEVSEQPGKETFYCLSMFPYPSGKLHMGHVRNYTIGDVISRYQRMLGKNVLQPLGWDAFGMPAENAAIDNNVAPAKWTYENIAYMKNQLKSLGLAVDWSREVTTCKPDYYRWEQWLFTRLFEKGVIYRKNGTVNWDPIDQTVLANEQVIDGRGWRSGALIEKREIPMYYFKITAYADELLESLDELPGWPEQVKTMQRNWIGRSRGMEVQFPYDQASIGEAGALKVFTTRPDTLMGATYVAVAAEHPLATLAAQGNPALQAFIDECKGGSVAEADVATQEKKGQPTSLFVEHPLTGEKLPVWVANYVLMHYGDGAVMAVPAHDERDFEFASKYDLPIKPVVRTSAGDETPAPWQAEYNEQGPLINSGEFTGLHFQDAFDAIEAALVKKALGQSRTQFRLRDWGISRQRYWGCPIPIVHCDTCGDVPVPEDQLPVILPEDVVPDGAGSPLARMPQFYECSCPKCGAPAKRETDTMDTFVESSWYYARYASPHYEGGLVEPNAANHWLPVDQYIGGIEHAILHLLYARFFHKLMRDEGLVTSNEPFKNLLTQGMVNAETYFRMETSGKKTWINPADVTLERDAKAKVISATLTSDGLPVEIGGTEKMSKSKKNGIDPQTMIDQYGADTCRLFMMFASPPDMSLEWSDSGVEGSHRFLRRVWRLAQAHVGQGASGSLDIAALTDEQKAVRRSIHQAIKQASQDIGQNQKFNTAVAQVMTLMNVLEKAPQATPQDRALLQEGLETVTLLLAPITPHISHELWTQLGHNEPVIDAGWPVFDAHALVQDSLQLVIQVNGKLRGHIEMPASASREEVEAAARINENVLRFTDGLTIRKVIVVPGKLVNIVAS.

A 'HIGH' region motif is present at residues 42–52 (PYPSGKLHMGH). The 'KMSKS' region motif lies at 627–631 (KMSKS). Lys-630 provides a ligand contact to ATP.

It belongs to the class-I aminoacyl-tRNA synthetase family.

The protein localises to the cytoplasm. It catalyses the reaction tRNA(Leu) + L-leucine + ATP = L-leucyl-tRNA(Leu) + AMP + diphosphate. This chain is Leucine--tRNA ligase, found in Pseudomonas syringae pv. tomato (strain ATCC BAA-871 / DC3000).